Consider the following 525-residue polypeptide: MLIMSSIKELYHAVSINDRFSVVNILEKKNIPIDYINFHPDNPLLEAVKLTNTDMIKTLLDYGICINTRDILGNTALHLIAMDYYVPHNDIKHGHHNDYVFKMVPIINLFLRKKANINACNNLNQTPLHLAAESNNTTLLKILLYNNAKVNILDIYGNTCLHYAVRGRNIESIKLLLSYNVDVNIRNFTYWYSALHEAVQIGDSKISRCIVSLLLCNKANVNTRCRLNTTPIFYAINCIDTLKLLLENGADINATSDNDNAVIHLATENRRYDIIKTLLDYGADVNMIGYRGKTPLYYATENYSYRNMKLLLDHGSNPNIADHIMNTPLFISIKCTCIENTKMLLDSGADINHVNDNGETPISYLAPNLIPTPVAILVISHIVLLKTKYNHIKYLPGFIKNISVIQNFTKFNNIKKVCEDEFRFMRSVSLSANHNLSSYICNDNLHTLVRFIKNPKIYYSINKIRIYRNRLYSIIERLLNRKKLHDLVLELIKDIGVFNKLPLDIISMILDFLSDDDLALMAIFN.

ANK repeat units lie at residues 39-71 (HPDN…TRDI), 72-122 (LGNT…ACNN), 123-152 (LNQT…KVNI), 156-185 (YGNT…DVNI), 190-226 (YWYS…TRCR), 227-254 (LNTT…DINA), 258-287 (NDNA…DVNM), 291-320 (RGKT…NPNI), and 324-353 (IMNT…DINH).

The polypeptide is Putative ankyrin repeat protein FPV228 (Fowlpox virus (strain NVSL) (FPV)).